The sequence spans 274 residues: 1D-myo-inositol 2-acetamido-2-deoxy-alpha-D-glucopyranoside deacetylase 2 (274 aa).

Residues His6, Asp9, and His140 each coordinate Zn(2+).

This sequence belongs to the MshB deacetylase family. Zn(2+) serves as cofactor.

It catalyses the reaction 1D-myo-inositol 2-acetamido-2-deoxy-alpha-D-glucopyranoside + H2O = 1D-myo-inositol 2-amino-2-deoxy-alpha-D-glucopyranoside + acetate. Functionally, catalyzes the deacetylation of 1D-myo-inositol 2-acetamido-2-deoxy-alpha-D-glucopyranoside (GlcNAc-Ins) in the mycothiol biosynthesis pathway. This is 1D-myo-inositol 2-acetamido-2-deoxy-alpha-D-glucopyranoside deacetylase 2 from Saccharopolyspora erythraea (strain ATCC 11635 / DSM 40517 / JCM 4748 / NBRC 13426 / NCIMB 8594 / NRRL 2338).